Reading from the N-terminus, the 576-residue chain is MGICHGKPVEQQSKSLPVSGETNEAPTNSQPPAKSSGFPFYSPSPVPSLFKSSPSVSSSVSSTPLRIFKRPFPPPSPAKHIRAFLARRYGSVKPNEVSIPEGKECEIGLDKSFGFSKQFASHYEIDGEVGRGHFGYTCSAKGKKGSLKGQEVAVKVIPKSKMTTAIAIEDVSREVKMLRALTGHKNLVQFYDAFEDDENVYIVMELCKGGELLDKILQRGGKYSEDDAKKVMVQILSVVAYCHLQGVVHRDLKPENFLFSTKDETSPLKAIDFGLSDYVKPDERLNDIVGSAYYVAPEVLHRTYGTEADMWSIGVIAYILLCGSRPFWARTESGIFRAVLKAEPNFEEAPWPSLSPEAVDFVKRLLNKDYRKRLTAAQALCHPWLVGSHELKIPSDMIIYKLVKVYIMSTSLRKSALAALAKTLTVPQLAYLREQFTLLGPSKNGYISMQNYKTAILKSSTDAMKDSRVFDFVHMISCLQYKKLDFEEFCASALSVYQLEAMETWEQHARRAYELFEKDGNRPIMIEELASELGLGPSVPVHVVLQDWIRHSDGKLSFLGFVRLLHGVSSRTLQKA.

The disordered stretch occupies residues 1–39 (MGICHGKPVEQQSKSLPVSGETNEAPTNSQPPAKSSGFP). Residue Gly2 is the site of N-myristoyl glycine attachment. Over residues 10–33 (EQQSKSLPVSGETNEAPTNSQPPA) the composition is skewed to polar residues. In terms of domain architecture, Protein kinase spans 123 to 385 (YEIDGEVGRG…AAQALCHPWL (263 aa)). ATP contacts are provided by residues 129 to 137 (VGRGHFGYT) and Lys155. Residue Asp251 is the Proton acceptor of the active site. Ser291 is modified (phosphoserine). Position 333 is a phosphoserine; by CPK1 and CPK34 (Ser333). The autoinhibitory domain stretch occupies residues 390-420 (ELKIPSDMIIYKLVKVYIMSTSLRKSALAAL). The tract at residues 409-429 (STSLRKSALAALAKTLTVPQL) is calmodulin binding (CaMBD). 4 EF-hand domains span residues 427 to 463 (PQLA…STDA), 464 to 499 (MKDS…VYQL), 500 to 539 (EAME…GPSV), and 542 to 571 (HVVL…VSSR). Ca(2+) contacts are provided by Ser442, Asn444, Tyr446, Lys483, Glu488, Asp519, Asn521, Glu528, Asp553, and Lys555. Phosphoserine is present on Ser557.

This sequence belongs to the protein kinase superfamily. Ser/Thr protein kinase family. CDPK subfamily. As to quaternary structure, binds calmodulin (CaM) in a calcium-dependent manner. Interacts with HSFA1A. In terms of processing, autophosphorylated.

It localises to the membrane. It carries out the reaction L-seryl-[protein] + ATP = O-phospho-L-seryl-[protein] + ADP + H(+). The catalysed reaction is L-threonyl-[protein] + ATP = O-phospho-L-threonyl-[protein] + ADP + H(+). With respect to regulation, activated by calcium and calmodulin. Autophosphorylation may play an important role in the regulation of the kinase activity. Functionally, may play a role in signal transduction pathways that involve calcium as a second messenger. Serine/threonine kinase that phosphorylates histone H3. Confers thermotolerance; involved in the heat-shock-mediated calmodulin-dependent signal transduction leading to the activation of heat-shock transcription factors (HSFs); phosphorylates HSFA1A. This chain is CDPK-related kinase 1 (CRK1), found in Arabidopsis thaliana (Mouse-ear cress).